We begin with the raw amino-acid sequence, 556 residues long: Formate--tetrahydrofolate ligase (556 aa).

65–72 (TPAGEGKT) provides a ligand contact to ATP.

Belongs to the formate--tetrahydrofolate ligase family.

It carries out the reaction (6S)-5,6,7,8-tetrahydrofolate + formate + ATP = (6R)-10-formyltetrahydrofolate + ADP + phosphate. It functions in the pathway one-carbon metabolism; tetrahydrofolate interconversion. This chain is Formate--tetrahydrofolate ligase, found in Ruminiclostridium cellulolyticum (strain ATCC 35319 / DSM 5812 / JCM 6584 / H10) (Clostridium cellulolyticum).